We begin with the raw amino-acid sequence, 1448 residues long: DNA primase TraC (1448 aa).

Composition is skewed to basic and acidic residues over residues 844–856 (ARVQEERVRRDPN), 863–872 (SAAKEARKTA), and 882–898 (DAQRRAAELERQERDRQ). Disordered regions lie at residues 844–915 (ARVQ…INVP) and 952–982 (QGAATAAVEPRSAQPAPEAQGEAQKPAQQAQ). Residues 964 to 982 (AQPAPEAQGEAQKPAQQAQ) are compositionally biased toward low complexity. The Toprim domain maps to 1237–1325 (PALVISEGYA…GKAIFPIFAP (89 aa)). The interval 1414–1448 (ISQVQRDEQQHQEQKHVEKKQQQIEQRPRRAARIG) is disordered. The segment covering 1418–1441 (QRDEQQHQEQKHVEKKQQQIEQRP) has biased composition (basic and acidic residues).

Required for autonomous replication in E.coli. Transferred into the recipient cell during bacterial conjugation. Catalyzes the synthesis of short oligoribonucleotide primers with CpA or pCpA at their 5'-termini on a single-stranded template DNA. In Escherichia coli, this protein is DNA primase TraC (traC).